The sequence spans 60 residues: Potassium channel toxin alpha-KTx 12.7 (60 aa).

The signal sequence occupies residues 1-22; it reads MSNMPVLIITLLLFSMYISTAA. Cystine bridges form between Cys-30–Cys-51, Cys-36–Cys-56, and Cys-40–Cys-58.

It belongs to the short scorpion toxin superfamily. Potassium channel inhibitor family. Alpha-KTx 12 subfamily. As to expression, expressed by the venom gland.

Its subcellular location is the secreted. Inhibits voltage-gated potassium channels. This is Potassium channel toxin alpha-KTx 12.7 from Lychas mucronatus (Chinese swimming scorpion).